A 1237-amino-acid polypeptide reads, in one-letter code: GTPase activating protein BUD2 (1237 aa).

Over residues 79-110 (GSGKSSISQPPPTTSTRRNLLRKSSNLNSSDQ) the composition is skewed to low complexity. The interval 79 to 124 (GSGKSSISQPPPTTSTRRNLLRKSSNLNSSDQSHSKSSEDNEHQPP) is disordered. Residues 111-121 (SHSKSSEDNEH) are compositionally biased toward basic and acidic residues. The C2 domain maps to 381–503 (NVEHPQLYDF…KQIKTTSTIM (123 aa)). The Ras-GAP domain maps to 637–905 (NSQDQAVSNS…PEIYDYFDKL (269 aa)). Disordered regions lie at residues 721–762 (SIHE…ERER) and 969–1007 (NNNGSMSNLGTPVNSPSRDMEREQDRSRSRSQSGTPDLD). The span at 735-754 (DVSDDDDDDDDNSSDDDADY) shows a compositional bias: acidic residues. Positions 986–996 (RDMEREQDRSR) are enriched in basic and acidic residues. Residues 1065–1093 (NITLKDIQKQSTKIMNKIQELEIYLENYE) adopt a coiled-coil conformation. The interval 1170-1204 (NGGMGNRNGHDVNGHNNNNNNNNNNTGDGYNETDR) is disordered. Over residues 1183-1199 (GHNNNNNNNNNNTGDGY) the composition is skewed to low complexity.

It localises to the cytoplasm. The protein resides in the cell cortex. Its subcellular location is the cell tip. It is found in the cell septum. In terms of biological role, GTPase activating protein (GAP) for RSR1 which is involved in the polarization of yeast and hyphal cells. Directs the site of new daughter cell growth in yeast and hyphal cells. Important for hyphae to maintain linear growth and necessary for hyphal responses to directional cues in the environment (tropisms). Required for correct localization of the septin rings and stabilization of the polarisome at hyphal tips. Involved in cell adhesion. This is GTPase activating protein BUD2 (BUD2) from Candida albicans (strain SC5314 / ATCC MYA-2876) (Yeast).